We begin with the raw amino-acid sequence, 310 residues long: Calcium homeostasis modulator protein 5 (310 aa).

4 consecutive transmembrane segments (helical) span residues 17-37 (TIGY…FSMV), 49-69 (FPYG…VGFF), 101-121 (LIKV…VALL), and 181-201 (QILG…GTCY).

It belongs to the CALHM family.

It localises to the membrane. Functionally, pore-forming subunit of a voltage-gated ion channel. The chain is Calcium homeostasis modulator protein 5 (calhm5.1) from Danio rerio (Zebrafish).